The chain runs to 412 residues: Heat stress transcription factor A-3 (412 aa).

Residues 53 to 147 (IPPFLSKTFD…LLKNIHRRRS (95 aa)) mediate DNA binding. Positions 144-170 (RRRSPQSNQTCCSSTSQSQGSPTEVGG) are disordered. Residues 148 to 166 (PQSNQTCCSSTSQSQGSPT) show a composition bias toward low complexity. Residues 159-225 (SQSQGSPTEV…QLLSFLAKLF (67 aa)) are hydrophobic repeat HR-A/B. Residues 166–224 (TEVGGEIEKLRKERRALMEEMVELQQQSRGTARHVDTVNQRLKAAEQRQKQLLSFLAKL) adopt a coiled-coil conformation. Residues 238-254 (KGKEKGGALGLEKARKK) carry the Bipartite nuclear localization signal motif. The AHA1 signature appears at 277-286 (DDWERLLMYD). An AHA2 motif is present at residues 381–390 (DVCWEQFAAG).

Belongs to the HSF family. Class A subfamily. In terms of assembly, homotrimer. Exhibits temperature-dependent phosphorylation.

The protein resides in the nucleus. Its function is as follows. Transcriptional activator that specifically binds DNA sequence 5'-AGAAnnTTCT-3' known as heat shock promoter elements (HSE). Involved in heat stress response. Activated by DREB2A under heat stress. The chain is Heat stress transcription factor A-3 (HSFA3) from Arabidopsis thaliana (Mouse-ear cress).